Consider the following 587-residue polypeptide: L-ornithine N(5)-monooxygenase (587 aa).

FAD is bound by residues 53–61 (EKHTSFQWH) and Gln72. Position 77 (Lys77) interacts with substrate. 235 to 238 (GGQS) contributes to the NADP(+) binding site. Residues 282–285 (NEVF) and Asn312 each bind substrate. 312 to 314 (NYS) is a binding site for NADP(+). A disordered region spans residues 488 to 511 (DNSAASGVSGASTPLTSPSEEEGK). Over residues 491 to 505 (AASGVSGASTPLTSP) the composition is skewed to polar residues. Residue 567–569 (TLL) coordinates FAD. Ser570 contacts substrate.

It belongs to the lysine N(6)-hydroxylase/L-ornithine N(5)-oxygenase family. In terms of assembly, homotetramer. FAD serves as cofactor.

It catalyses the reaction L-ornithine + NADPH + O2 = N(5)-hydroxy-L-ornithine + NADP(+) + H2O. The enzyme catalyses L-ornithine + NADH + O2 = N(5)-hydroxy-L-ornithine + NAD(+) + H2O. It functions in the pathway siderophore biosynthesis; ferrichrome biosynthesis. L-ornithine N(5)-monooxygenase; part of the siderophore biosynthetic pathway. Omphalotus olearius produces ferrichrome A, but no other siderophore has been detected. Ferrichrome A consists of a hexapeptide ring made up of one glycine, two serine, and three N(5)-hydroxyornithine amino acid residues, the latter acylated by trans-(alpha-methyl)-glutaconic acid residues. The biosynthesis of ferrichrome A depends on the hydroxylation of ornithine to N(5)-hydroxyornithine, catalyzed by the monooxygenase omo1. The second step, the acylation of N(5)-hydroxy-L-ornithine is probably catalyzed by the N-acyltransferase ato1. Finally, assembly of ferrichrome A is catalyzed by the nonribosomal peptide synthase (NRPS) fso1. The polypeptide is L-ornithine N(5)-monooxygenase (Omphalotus olearius (Jack o'lantern)).